Here is a 50-residue protein sequence, read N- to C-terminus: uncharacterized protein (50 aa).

The interval 28–50 (SKLSPVTNGGKTIGKSNKVSKND) is disordered. A compositionally biased stretch (polar residues) spans 29-50 (KLSPVTNGGKTIGKSNKVSKND).

This is an uncharacterized protein from Haemophilus influenzae (strain ATCC 51907 / DSM 11121 / KW20 / Rd).